The following is a 137-amino-acid chain: Small ribosomal subunit protein bS16 (137 aa).

The protein belongs to the bacterial ribosomal protein bS16 family.

The polypeptide is Small ribosomal subunit protein bS16 (Leuconostoc citreum (strain KM20)).